We begin with the raw amino-acid sequence, 338 residues long: UDP-glucose 4-epimerase (338 aa).

NAD(+) contacts are provided by residues 11–12, 31–36, 58–59, 80–84, asparagine 99, serine 124, tyrosine 149, lysine 153, and phenylalanine 178; these read YI, DNLCNS, DI, and FAGLK. 2 residues coordinate substrate: serine 124 and tyrosine 149. The Proton acceptor role is filled by tyrosine 149. Substrate contacts are provided by residues asparagine 179, 199–200, 216–218, arginine 231, 292–295, and tyrosine 299; these read NL, AIF, and REGD.

This sequence belongs to the NAD(P)-dependent epimerase/dehydratase family. Homodimer. It depends on NAD(+) as a cofactor.

It catalyses the reaction UDP-alpha-D-glucose = UDP-alpha-D-galactose. It functions in the pathway carbohydrate metabolism; galactose metabolism. Its activity is regulated as follows. Inhibited by UDP-phenol and NaBH3CN. Involved in the metabolism of galactose. Catalyzes the conversion of UDP-galactose (UDP-Gal) to UDP-glucose (UDP-Glc) through a mechanism involving the transient reduction of NAD. It is only active on UDP-galactose and UDP-glucose. The protein is UDP-glucose 4-epimerase (galE) of Escherichia coli (strain K12).